The sequence spans 358 residues: Homoserine O-succinyltransferase (358 aa).

Cys-146 serves as the catalytic Acyl-thioester intermediate. The substrate site is built by Lys-167 and Ser-196. His-239 functions as the Proton acceptor in the catalytic mechanism. Glu-241 is a catalytic residue. Arg-253 is a substrate binding site.

This sequence belongs to the MetA family.

The protein resides in the cytoplasm. It carries out the reaction L-homoserine + succinyl-CoA = O-succinyl-L-homoserine + CoA. It functions in the pathway amino-acid biosynthesis; L-methionine biosynthesis via de novo pathway; O-succinyl-L-homoserine from L-homoserine: step 1/1. In terms of biological role, transfers a succinyl group from succinyl-CoA to L-homoserine, forming succinyl-L-homoserine. The chain is Homoserine O-succinyltransferase from Nitrosococcus oceani (strain ATCC 19707 / BCRC 17464 / JCM 30415 / NCIMB 11848 / C-107).